A 479-amino-acid chain; its full sequence is Ribosomal RNA small subunit methyltransferase F (479 aa).

S-adenosyl-L-methionine contacts are provided by residues 125-131 (AAAPGSK), Glu-149, Asp-176, and Asp-194. Residue Cys-247 is the Nucleophile of the active site.

The protein belongs to the class I-like SAM-binding methyltransferase superfamily. RsmB/NOP family.

It localises to the cytoplasm. It catalyses the reaction cytidine(1407) in 16S rRNA + S-adenosyl-L-methionine = 5-methylcytidine(1407) in 16S rRNA + S-adenosyl-L-homocysteine + H(+). Specifically methylates the cytosine at position 1407 (m5C1407) of 16S rRNA. The chain is Ribosomal RNA small subunit methyltransferase F from Escherichia coli O17:K52:H18 (strain UMN026 / ExPEC).